We begin with the raw amino-acid sequence, 604 residues long: Glutamine--fructose-6-phosphate aminotransferase [isomerizing] (604 aa).

Cysteine 2 (nucleophile; for GATase activity) is an active-site residue. In terms of domain architecture, Glutamine amidotransferase type-2 spans 2–218 (CGIVGVVGNR…DKELVILTKD (217 aa)). SIS domains are found at residues 284–423 (IITS…ANGK) and 452–594 (VAEK…VDKP). The active-site For Fru-6P isomerization activity is the lysine 599.

In terms of assembly, homodimer.

The protein localises to the cytoplasm. It catalyses the reaction D-fructose 6-phosphate + L-glutamine = D-glucosamine 6-phosphate + L-glutamate. Its function is as follows. Catalyzes the first step in hexosamine metabolism, converting fructose-6P into glucosamine-6P using glutamine as a nitrogen source. This chain is Glutamine--fructose-6-phosphate aminotransferase [isomerizing], found in Streptococcus pyogenes serotype M3 (strain ATCC BAA-595 / MGAS315).